A 961-amino-acid chain; its full sequence is Mitogen-activated protein kinase kinase kinase 13-B (961 aa).

Residues Arg-89–Glu-115 form a disordered region. The segment covering Gly-101–Asn-114 has biased composition (low complexity). The 242-residue stretch at Ile-171–Ile-412 folds into the Protein kinase domain. ATP-binding positions include Leu-177–Val-185 and Lys-198. The active-site Proton acceptor is the Asp-282. Leucine-zipper regions lie at residues Val-436–Leu-457 and Leu-489–Val-510. Residues Arg-460–Glu-497 adopt a coiled-coil conformation. Disordered stretches follow at residues Glu-507–Gln-644, Thr-796–Cys-874, and Asn-933–Trp-961. Positions Ala-563–Ser-580 are enriched in low complexity. The span at Gly-586 to Asn-598 shows a compositional bias: basic residues. Low complexity predominate over residues Gln-613–Pro-628. A compositionally biased stretch (acidic residues) spans Asp-813–Val-826. The interval Ser-814–Glu-827 is acidic. Polar residues predominate over residues Ser-839–Val-854. Positions Ala-934–Cys-945 are enriched in acidic residues. Residues Thr-949–Trp-961 show a composition bias toward polar residues.

The protein belongs to the protein kinase superfamily. Ser/Thr protein kinase family.

Its subcellular location is the cytoplasm. It is found in the membrane. It catalyses the reaction L-seryl-[protein] + ATP = O-phospho-L-seryl-[protein] + ADP + H(+). It carries out the reaction L-threonyl-[protein] + ATP = O-phospho-L-threonyl-[protein] + ADP + H(+). Its function is as follows. May have a role in the JNK signaling pathway. The chain is Mitogen-activated protein kinase kinase kinase 13-B (map3k13-b) from Xenopus laevis (African clawed frog).